The following is a 322-amino-acid chain: Ribosomal RNA small subunit methyltransferase H (322 aa).

S-adenosyl-L-methionine contacts are provided by residues 47-49 (GGH), D67, F93, D112, and Q119.

The protein belongs to the methyltransferase superfamily. RsmH family.

The protein localises to the cytoplasm. It carries out the reaction cytidine(1402) in 16S rRNA + S-adenosyl-L-methionine = N(4)-methylcytidine(1402) in 16S rRNA + S-adenosyl-L-homocysteine + H(+). In terms of biological role, specifically methylates the N4 position of cytidine in position 1402 (C1402) of 16S rRNA. The sequence is that of Ribosomal RNA small subunit methyltransferase H from Stenotrophomonas maltophilia (strain R551-3).